A 137-amino-acid polypeptide reads, in one-letter code: Nucleoside diphosphate kinase (137 aa).

The ATP site is built by lysine 9, phenylalanine 58, arginine 86, threonine 92, arginine 103, and asparagine 113. The active-site Pros-phosphohistidine intermediate is the histidine 121.

It belongs to the NDK family. As to quaternary structure, homotetramer. The cofactor is Mg(2+).

It localises to the cytoplasm. It catalyses the reaction a 2'-deoxyribonucleoside 5'-diphosphate + ATP = a 2'-deoxyribonucleoside 5'-triphosphate + ADP. The catalysed reaction is a ribonucleoside 5'-diphosphate + ATP = a ribonucleoside 5'-triphosphate + ADP. Functionally, major role in the synthesis of nucleoside triphosphates other than ATP. The ATP gamma phosphate is transferred to the NDP beta phosphate via a ping-pong mechanism, using a phosphorylated active-site intermediate. The polypeptide is Nucleoside diphosphate kinase (Streptococcus pneumoniae (strain P1031)).